We begin with the raw amino-acid sequence, 441 residues long: Ubiquitin carboxyl-terminal hydrolase MINDY-3 (441 aa).

Catalysis depends on Cys51, which acts as the Nucleophile. The active-site Proton acceptor is His284.

This sequence belongs to the MINDY deubiquitinase family. FAM188 subfamily.

It localises to the nucleus. The enzyme catalyses Thiol-dependent hydrolysis of ester, thioester, amide, peptide and isopeptide bonds formed by the C-terminal Gly of ubiquitin (a 76-residue protein attached to proteins as an intracellular targeting signal).. Functionally, hydrolase that can remove 'Lys-48'-linked conjugated ubiquitin from proteins. This Xenopus tropicalis (Western clawed frog) protein is Ubiquitin carboxyl-terminal hydrolase MINDY-3 (mindy3).